Here is a 589-residue protein sequence, read N- to C-terminus: Aspartate--tRNA(Asp/Asn) ligase (589 aa).

Glu-176 contributes to the L-aspartate binding site. The interval 200–203 (QLFK) is aspartate. Arg-222 provides a ligand contact to L-aspartate. ATP contacts are provided by residues 222–224 (RDE) and Gln-231. His-450 provides a ligand contact to L-aspartate. ATP is bound at residue Glu-484. Arg-491 contacts L-aspartate. 536–539 (GLDR) is a binding site for ATP.

This sequence belongs to the class-II aminoacyl-tRNA synthetase family. Type 1 subfamily. In terms of assembly, homodimer.

It localises to the cytoplasm. It carries out the reaction tRNA(Asx) + L-aspartate + ATP = L-aspartyl-tRNA(Asx) + AMP + diphosphate. In terms of biological role, aspartyl-tRNA synthetase with relaxed tRNA specificity since it is able to aspartylate not only its cognate tRNA(Asp) but also tRNA(Asn). Reaction proceeds in two steps: L-aspartate is first activated by ATP to form Asp-AMP and then transferred to the acceptor end of tRNA(Asp/Asn). This Bacillus cytotoxicus (strain DSM 22905 / CIP 110041 / 391-98 / NVH 391-98) protein is Aspartate--tRNA(Asp/Asn) ligase.